The primary structure comprises 405 residues: Tyrosine--tRNA ligase (405 aa).

Tyr35 contacts L-tyrosine. The 'HIGH' region signature appears at 40-49 (TTSSSLHIGH). Residues Tyr166 and Gln170 each coordinate L-tyrosine. Positions 226 to 230 (KMGKS) match the 'KMSKS' region motif. Lys229 provides a ligand contact to ATP. The region spanning 340-404 (ILLIDLMLDS…VGKKKFLRIV (65 aa)) is the S4 RNA-binding domain.

Belongs to the class-I aminoacyl-tRNA synthetase family. TyrS type 1 subfamily. As to quaternary structure, homodimer.

It is found in the cytoplasm. The enzyme catalyses tRNA(Tyr) + L-tyrosine + ATP = L-tyrosyl-tRNA(Tyr) + AMP + diphosphate + H(+). Its function is as follows. Catalyzes the attachment of tyrosine to tRNA(Tyr) in a two-step reaction: tyrosine is first activated by ATP to form Tyr-AMP and then transferred to the acceptor end of tRNA(Tyr). In Borrelia garinii subsp. bavariensis (strain ATCC BAA-2496 / DSM 23469 / PBi) (Borreliella bavariensis), this protein is Tyrosine--tRNA ligase.